The sequence spans 439 residues: Polygalacturonase QRT2 (439 aa).

The signal sequence occupies residues 1–21 (MYEKIIILSVFLLTFLPSCFS). A disordered region spans residues 43–69 (RQHQHGHNTRNSHLKNRHGYAPRSSPR). Residues 44 to 62 (QHQHGHNTRNSHLKNRHGY) show a composition bias toward basic residues. PbH1 repeat units lie at residues 201–250 (CNNL…HVSG) and 251–272 (TQNILIQDSIVRTGDDCISIVS). Asp265 (proton donor) is an active-site residue. The active site involves His288. PbH1 repeat units lie at residues 304–325 (VSNVVVNKATLIGTTNGVRIKT) and 333–354 (AKNIIFQDIIMKNVTNPIIINQ).

This sequence belongs to the glycosyl hydrolase 28 family. As to expression, expressed predominantly in roots with lower expression levels in rosette leaves, flower buds and siliques. Bearly detected in seeds. Found in flowers undergoing floral organ abscission. Also expressed early in anther development, at the time of microspore separation.

It localises to the secreted. Its subcellular location is the cell wall. The catalysed reaction is (1,4-alpha-D-galacturonosyl)n+m + H2O = (1,4-alpha-D-galacturonosyl)n + (1,4-alpha-D-galacturonosyl)m.. In terms of biological role, polygalacturonase required for cell type-specific pectin degradation to separate microspores. Involved in anther dehiscence and floral organ abscission. The chain is Polygalacturonase QRT2 (QRT2) from Arabidopsis thaliana (Mouse-ear cress).